The sequence spans 513 residues: Maturase K (513 aa).

This sequence belongs to the intron maturase 2 family. MatK subfamily.

It localises to the plastid. It is found in the chloroplast. Functionally, usually encoded in the trnK tRNA gene intron. Probably assists in splicing its own and other chloroplast group II introns. The sequence is that of Maturase K from Phaseolus vulgaris (Kidney bean).